The primary structure comprises 197 residues: FMN-dependent NADH:quinone oxidoreductase (197 aa).

Residues Ser-10, 16–18 (SQS), 93–96 (MYNF), and 137–140 (TRGG) contribute to the FMN site.

This sequence belongs to the azoreductase type 1 family. In terms of assembly, homodimer. It depends on FMN as a cofactor.

It carries out the reaction 2 a quinone + NADH + H(+) = 2 a 1,4-benzosemiquinone + NAD(+). The catalysed reaction is N,N-dimethyl-1,4-phenylenediamine + anthranilate + 2 NAD(+) = 2-(4-dimethylaminophenyl)diazenylbenzoate + 2 NADH + 2 H(+). In terms of biological role, quinone reductase that provides resistance to thiol-specific stress caused by electrophilic quinones. Also exhibits azoreductase activity. Catalyzes the reductive cleavage of the azo bond in aromatic azo compounds to the corresponding amines. The polypeptide is FMN-dependent NADH:quinone oxidoreductase (Shewanella loihica (strain ATCC BAA-1088 / PV-4)).